A 303-amino-acid chain; its full sequence is Monoglyceride lipase (303 aa).

Residue T10 is modified to Phosphothreonine. 3'-nitrotyrosine is present on Y58. S122 functions as the Nucleophile in the catalytic mechanism. Position 189 is a phosphoserine (S189). Catalysis depends on charge relay system residues D239 and H269.

It belongs to the AB hydrolase superfamily. Monoacylglycerol lipase family. Homodimer. In terms of tissue distribution, ubiquitous.

The protein localises to the cytoplasm. It localises to the cytosol. Its subcellular location is the membrane. It catalyses the reaction Hydrolyzes glycerol monoesters of long-chain fatty acids.. It carries out the reaction a 1-acylglycerol + H2O = glycerol + a fatty acid + H(+). The catalysed reaction is a 2-acylglycerol + H2O = glycerol + a fatty acid + H(+). The enzyme catalyses 2-(5Z,8Z,11Z,14Z-eicosatetraenoyl)-glycerol + H2O = glycerol + (5Z,8Z,11Z,14Z)-eicosatetraenoate + H(+). It catalyses the reaction 1-octanoylglycerol + H2O = octanoate + glycerol + H(+). It carries out the reaction 1-decanoylglycerol + H2O = decanoate + glycerol + H(+). The catalysed reaction is 1-dodecanoylglycerol + H2O = dodecanoate + glycerol + H(+). The enzyme catalyses 1-tetradecanoylglycerol + H2O = tetradecanoate + glycerol + H(+). It catalyses the reaction 2-hexadecanoylglycerol + H2O = glycerol + hexadecanoate + H(+). It carries out the reaction 1-(9Z-octadecenoyl)-glycerol + H2O = glycerol + (9Z)-octadecenoate + H(+). The catalysed reaction is 2-(9Z-octadecenoyl)-glycerol + H2O = glycerol + (9Z)-octadecenoate + H(+). The enzyme catalyses 2-(9Z,12Z-octadecadienoyl)-glycerol + H2O = (9Z,12Z)-octadecadienoate + glycerol + H(+). It catalyses the reaction 1-(5Z,8Z,11Z,14Z-eicosatetraenoyl)-glycerol + H2O = glycerol + (5Z,8Z,11Z,14Z)-eicosatetraenoate + H(+). It carries out the reaction 1-(9Z,12Z-octadecadienoyl)-glycerol + H2O = (9Z,12Z)-octadecadienoate + glycerol + H(+). The catalysed reaction is 1-hexadecanoylglycerol + H2O = glycerol + hexadecanoate + H(+). The enzyme catalyses 1-octadecanoylglycerol + H2O = octadecanoate + glycerol + H(+). It catalyses the reaction prostaglandin E2 1-glyceryl ester + H2O = prostaglandin E2 + glycerol + H(+). It carries out the reaction prostaglandin D2-1-glycerol ester + H2O = prostaglandin D2 + glycerol + H(+). The catalysed reaction is 2-glyceryl-15-deoxy-Delta(12,14)-prostaglandin J2 + H2O = 15-deoxy-Delta(12,14)-prostaglandin J2 + glycerol + H(+). The enzyme catalyses prostaglandin F2alpha 1-glyceryl ester + H2O = prostaglandin F2alpha + glycerol + H(+). The protein operates within glycerolipid metabolism; triacylglycerol degradation. Its function is as follows. Converts monoacylglycerides to free fatty acids and glycerol. Hydrolyzes the endocannabinoid 2-arachidonoylglycerol, and thereby contributes to the regulation of endocannabinoid signaling, nociperception and perception of pain. Regulates the levels of fatty acids that serve as signaling molecules and promote cancer cell migration, invasion and tumor growth. This chain is Monoglyceride lipase, found in Mus musculus (Mouse).